The following is a 787-amino-acid chain: Exocyst complex component SEC15B (787 aa).

This sequence belongs to the SEC15 family. As to quaternary structure, the exocyst complex is composed of SEC3, SEC5, SEC6, SEC8, SEC10, EXO70A1 and EXO84B. Interacts with EXO84B. Binds to EXO70H1 AND EXO70B2. Binds directly to B1L.

Its subcellular location is the cytoplasm. The protein resides in the cytosol. The protein localises to the cytoskeleton. It is found in the phragmoplast. It localises to the secreted. Its subcellular location is the cell wall. The protein resides in the extracellular exosome. Functionally, component of the exocyst complex involved in the docking of exocytic vesicles with fusion sites on the plasma membrane during regulated or polarized secretion. Involved in polarized cell growth and organ morphogenesis. During cytokinesis, involved in cell plate initiation, cell plate maturation and formation of new primary cell wall. The chain is Exocyst complex component SEC15B from Arabidopsis thaliana (Mouse-ear cress).